A 377-amino-acid chain; its full sequence is SH2/SH3 adapter protein NCK1 (377 aa).

A2 carries the N-acetylalanine modification. Residues 2-61 (AEEVVVVAKFDYVAQQEQELDIKKNERLWLLDDSKSWWRVRNSMNKTGFVPSNYVERKNS) form the SH3 1 domain. Phosphoserine is present on residues S85, S89, S91, and S96. The residue at position 105 (Y105) is a Phosphotyrosine. In terms of domain architecture, SH3 2 spans 106-165 (DLNMPAYVKFNYMAEREDELSLIKGTKVIVMEKCSDGWWRGSYNGQVGWFPSNYVTEEGD). Phosphoserine is present on S166. Positions 190–252 (QVLHVVQALY…PKNYVTVMQN (63 aa)) constitute an SH3 3 domain. Residues 282–376 (WYYGKVTRHQ…GEKLYLVKHL (95 aa)) form the SH2 domain.

In terms of assembly, interacts (via SH2 domain and SH3 domain 2) with EGFR. Interacts with PAK1 and SOS1. Interacts (via SH3 domains) with PKN2. Associates with BLNK, PLCG1, VAV1 and NCK1 in a B-cell antigen receptor-dependent fashion. Interacts with SOCS7. This interaction is required for nuclear import. Part of a complex containing PPP1R15B, PP1 and NCK1. Interacts with RALGPS1. Interacts with CAV2 (tyrosine phosphorylated form). Interacts with ADAM15. Interacts with FASLG. Directly interacts with RASA1. Interacts with isoform 4 of MINK1. Interacts with FLT1 (tyrosine phosphorylated). Interacts with KDR (tyrosine phosphorylated). Interacts (via SH2 domain) with EPHB1; activates the JUN cascade to regulate cell adhesion. Interacts with EPHA2. Interacts (via SH2 domain) with PDGFRB (tyrosine phosphorylated). Interacts with the inactive form of EIF2AK2/PKR. Interacts with PTPN1. Interacts with INSR/insulin receptor (in response to insulin stimulation); This interaction may mediate PTPN1 recruitment leading to INSR dephosphorylation. Interacts with IRS1. Post-translationally, phosphorylated on Ser and Tyr residues. Phosphorylated in response to activation of EGFR and FcERI. Phosphorylated by activated PDGFRB.

It localises to the cytoplasm. Its subcellular location is the endoplasmic reticulum. The protein resides in the nucleus. Functionally, adapter protein which associates with tyrosine-phosphorylated growth factor receptors, such as KDR and PDGFRB, or their cellular substrates. Maintains low levels of EIF2S1 phosphorylation by promoting its dephosphorylation by PP1. Plays a role in the DNA damage response, not in the detection of the damage by ATM/ATR, but for efficient activation of downstream effectors, such as that of CHEK2. Plays a role in ELK1-dependent transcriptional activation in response to activated Ras signaling. Modulates the activation of EIF2AK2/PKR by dsRNA. May play a role in cell adhesion and migration through interaction with ephrin receptors. This Homo sapiens (Human) protein is SH2/SH3 adapter protein NCK1 (NCK1).